Consider the following 74-residue polypeptide: Antimicrobial peptide HsAp2 (74 aa).

The signal sequence occupies residues 1 to 21; that stretch reads MSRRLILILVLVAMLVKTMAG. A propeptide spanning residues 22-33 is cleaved from the precursor; sequence MESKWVETTYEI. Proline 65 is subject to Proline amide. A propeptide spanning residues 69–74 is cleaved from the precursor; that stretch reads AISEQT.

Belongs to the non-disulfide-bridged peptide (NDBP) superfamily. Medium-length antimicrobial peptide (group 3) family. Expressed by the venom gland.

It localises to the secreted. The protein resides in the target cell membrane. Functionally, possesses antimicrobial activity against both Gram-negative and Gram-positive bacteria, as well as against the fungus C.tropicalis. Also possesses a relatively high hemolytic activity. May act by disrupting the integrity of the bacterial cell membrane. The protein is Antimicrobial peptide HsAp2 of Heterometrus spinifer (Asia giant forest scorpion).